The primary structure comprises 402 residues: Alkaline proteinase (402 aa).

Residues 1-20 (MVTLRRLAVLLGAIPAALAA) form the signal peptide. The propeptide occupies 21 to 120 (PTTQKREVVP…EQDEGEFSTA (100 aa)). In terms of domain architecture, Inhibitor I9 spans 32–108 (KYIVTLKEGA…EVEEDQIWHL (77 aa)). Residues 128-402 (AWGLGTISHR…NRILYNGNGA (275 aa)) enclose the Peptidase S8 domain. Residues aspartate 160, histidine 191, and serine 347 each act as charge relay system in the active site. A compositionally biased stretch (polar residues) spans 382–392 (GRVSNPGSGSP). A disordered region spans residues 382–402 (GRVSNPGSGSPNRILYNGNGA).

It belongs to the peptidase S8 family.

In Hapsidospora chrysogena (Acremonium chrysogenum), this protein is Alkaline proteinase (ALP).